The following is a 126-amino-acid chain: Phosphoribosyl-AMP cyclohydrolase (126 aa).

Asp-76 contributes to the Mg(2+) binding site. Position 77 (Cys-77) interacts with Zn(2+). Mg(2+)-binding residues include Asp-78 and Asp-80. Residues Cys-94 and Cys-101 each coordinate Zn(2+).

The protein belongs to the PRA-CH family. Homodimer. Mg(2+) is required as a cofactor. The cofactor is Zn(2+).

Its subcellular location is the cytoplasm. It carries out the reaction 1-(5-phospho-beta-D-ribosyl)-5'-AMP + H2O = 1-(5-phospho-beta-D-ribosyl)-5-[(5-phospho-beta-D-ribosylamino)methylideneamino]imidazole-4-carboxamide. Its pathway is amino-acid biosynthesis; L-histidine biosynthesis; L-histidine from 5-phospho-alpha-D-ribose 1-diphosphate: step 3/9. In terms of biological role, catalyzes the hydrolysis of the adenine ring of phosphoribosyl-AMP. This chain is Phosphoribosyl-AMP cyclohydrolase, found in Ruthia magnifica subsp. Calyptogena magnifica.